Reading from the N-terminus, the 41-residue chain is Submaxillary gland androgen-regulated protein 2, isoform beta (41 aa).

The first 22 residues, 1 to 22, serve as a signal peptide directing secretion; sequence MKALYMVFVLWVLIGCFLRLLK.

It is found in the secreted. Its function is as follows. May play a role in protection or detoxification. This is Submaxillary gland androgen-regulated protein 2, isoform beta (Smr2) from Mus musculus (Mouse).